Reading from the N-terminus, the 510-residue chain is Maturase K (510 aa).

This sequence belongs to the intron maturase 2 family. MatK subfamily.

The protein resides in the plastid. It is found in the chloroplast. Functionally, usually encoded in the trnK tRNA gene intron. Probably assists in splicing its own and other chloroplast group II introns. This Grahamia bracteata protein is Maturase K.